Reading from the N-terminus, the 350-residue chain is Protein RecA (350 aa).

66–73 lines the ATP pocket; it reads GPESSGKT.

It belongs to the RecA family.

The protein resides in the cytoplasm. Its function is as follows. Can catalyze the hydrolysis of ATP in the presence of single-stranded DNA, the ATP-dependent uptake of single-stranded DNA by duplex DNA, and the ATP-dependent hybridization of homologous single-stranded DNAs. It interacts with LexA causing its activation and leading to its autocatalytic cleavage. The polypeptide is Protein RecA (Nocardioides sp. (strain ATCC BAA-499 / JS614)).